A 677-amino-acid chain; its full sequence is Probable potassium transport system protein Kup (677 aa).

The next 12 membrane-spanning stretches (helical) occupy residues 13–33, 54–74, 98–118, 137–157, 171–191, 217–237, 249–269, 296–316, 345–365, 374–394, 402–422, and 429–449; these read GALI…LYTM, VSLV…IIAL, WLLL…TLTP, FIFP…LLIV, IFGP…LVNI, TGIF…ALYS, VSWI…GAWI, IFGV…LISG, MYIG…VWAF, AYGL…YQFI, ILAF…LIAS, and GGYA…IWFY.

The protein belongs to the HAK/KUP transporter (TC 2.A.72) family.

It localises to the cell membrane. It catalyses the reaction K(+)(in) + H(+)(in) = K(+)(out) + H(+)(out). Functionally, transport of potassium into the cell. Likely operates as a K(+):H(+) symporter. This chain is Probable potassium transport system protein Kup, found in Leuconostoc mesenteroides subsp. mesenteroides (strain ATCC 8293 / DSM 20343 / BCRC 11652 / CCM 1803 / JCM 6124 / NCDO 523 / NBRC 100496 / NCIMB 8023 / NCTC 12954 / NRRL B-1118 / 37Y).